Here is a 224-residue protein sequence, read N- to C-terminus: UPF0758 protein mma_2551 (224 aa).

An MPN domain is found at 102-224 (SLNSPQAVKK…VYSFAEHGHL (123 aa)). Residues His-173, His-175, and Asp-186 each coordinate Zn(2+). A JAMM motif motif is present at residues 173-186 (HNHPSGSSEPSAAD).

Belongs to the UPF0758 family.

The protein is UPF0758 protein mma_2551 of Janthinobacterium sp. (strain Marseille) (Minibacterium massiliensis).